The primary structure comprises 632 residues: Golgin subfamily A member 8M (632 aa).

The interval 1-77 (MAEETQHNKL…SSATLKDLES (77 aa)) is disordered. The span at 38–50 (TNGSIPQTATSGG) shows a compositional bias: polar residues. 2 coiled-coil regions span residues 86-154 (LDSR…HMKR) and 209-421 (KLEQ…SLMA). A compositionally biased stretch (basic and acidic residues) spans 352-362 (KQEERIQEQHK). 3 disordered regions span residues 352–384 (KQEE…NKST), 422–456 (LPGE…REAM), and 505–524 (DAAL…DEGE). Gly residues predominate over residues 508-520 (LGGGHHQAGAQGG).

Belongs to the GOLGA8 family.

This is Golgin subfamily A member 8M from Homo sapiens (Human).